Reading from the N-terminus, the 906-residue chain is Serine-aspartate repeat-containing protein C (906 aa).

A signal peptide spans 1–50 (MNNKKTATNRKGMIPNRLNKFSIRKYSVGTASILVGTTLIFGLSGHEAKA). The tract at residues 51–127 (AEHTNGELNQ…QPTKKNNDAT (77 aa)) is disordered. A ligand binding A region region spans residues 51–486 (AEHTNGELNQ…GSSTANGDQK (436 aa)). 2 stretches are compositionally biased toward polar residues: residues 56–71 (GELN…PSEN) and 80–119 (RQQN…STQP). 2 CNA-B domains span residues 487–597 (KYNL…YKTP) and 598–708 (KYSL…EEET). The disordered stretch occupies residues 669-881 (KQTGTNTTED…TGSENNGSNN (213 aa)). Acidic residues-rich tracts occupy residues 676–686 (TEDDKDADGGE) and 703–845 (YFEE…DSDS). An LPXTG sorting signal motif is present at residues 869-873 (LPETG). A Pentaglycyl murein peptidoglycan amidated threonine modification is found at Thr872. The propeptide at 873-906 (GSENNGSNNATLFGGLFAALGSLLLFGRRKKQNK) is removed by sortase.

It belongs to the serine-aspartate repeat-containing protein (SDr) family. In terms of assembly, homodimerizes; via N2-Domain. Interacts with host NRXN1; this interaction mediates bacterial attachment to host cells.

Its subcellular location is the secreted. The protein resides in the cell wall. Its function is as follows. Cell surface-associated calcium-binding protein which plays an important role in adhesion and pathogenesis. Mediates interactions with components of the extracellular matrix such as host NRXN1 to promote bacterial adhesion. The polypeptide is Serine-aspartate repeat-containing protein C (sdrC) (Staphylococcus aureus (strain MRSA252)).